The sequence spans 175 residues: Sec-independent protein translocase protein TatB (175 aa).

A helical transmembrane segment spans residues methionine 1–glycine 21. 2 disordered regions span residues valine 96 to glycine 115 and valine 153 to leucine 175. The segment covering valine 160 to leucine 175 has biased composition (basic residues).

Belongs to the TatB family. In terms of assembly, the Tat system comprises two distinct complexes: a TatABC complex, containing multiple copies of TatA, TatB and TatC subunits, and a separate TatA complex, containing only TatA subunits. Substrates initially bind to the TatABC complex, which probably triggers association of the separate TatA complex to form the active translocon.

The protein localises to the cell inner membrane. Part of the twin-arginine translocation (Tat) system that transports large folded proteins containing a characteristic twin-arginine motif in their signal peptide across membranes. Together with TatC, TatB is part of a receptor directly interacting with Tat signal peptides. TatB may form an oligomeric binding site that transiently accommodates folded Tat precursor proteins before their translocation. In Burkholderia mallei (strain ATCC 23344), this protein is Sec-independent protein translocase protein TatB.